Here is a 123-residue protein sequence, read N- to C-terminus: Ribosome-binding factor A (123 aa).

The protein belongs to the RbfA family. Monomer. Binds 30S ribosomal subunits, but not 50S ribosomal subunits or 70S ribosomes.

The protein localises to the cytoplasm. Its function is as follows. One of several proteins that assist in the late maturation steps of the functional core of the 30S ribosomal subunit. Associates with free 30S ribosomal subunits (but not with 30S subunits that are part of 70S ribosomes or polysomes). Required for efficient processing of 16S rRNA. May interact with the 5'-terminal helix region of 16S rRNA. The polypeptide is Ribosome-binding factor A (Trichlorobacter lovleyi (strain ATCC BAA-1151 / DSM 17278 / SZ) (Geobacter lovleyi)).